The primary structure comprises 439 residues: Xylose isomerase (439 aa).

Active-site residues include H101 and D104. The Mg(2+) site is built by E232, E268, H271, D296, D307, D309, and D339.

It belongs to the xylose isomerase family. As to quaternary structure, homotetramer. Mg(2+) serves as cofactor.

Its subcellular location is the cytoplasm. The catalysed reaction is alpha-D-xylose = alpha-D-xylulofuranose. The polypeptide is Xylose isomerase (Haemophilus influenzae (strain PittEE)).